The sequence spans 166 residues: Protein FAM163B (166 aa).

Residues 6–26 (VVITGGILATVILLCIIAVLC) traverse the membrane as a helical segment. Ser-40 bears the Phosphoserine mark.

Belongs to the FAM163 family.

It localises to the membrane. The polypeptide is Protein FAM163B (FAM163B) (Homo sapiens (Human)).